A 105-amino-acid chain; its full sequence is Large ribosomal subunit protein bL21 (105 aa).

This sequence belongs to the bacterial ribosomal protein bL21 family. Part of the 50S ribosomal subunit. Contacts protein L20.

Its function is as follows. This protein binds to 23S rRNA in the presence of protein L20. This Rickettsia bellii (strain OSU 85-389) protein is Large ribosomal subunit protein bL21.